The sequence spans 211 residues: Large ribosomal subunit protein eL13 (211 aa).

The protein belongs to the eukaryotic ribosomal protein eL13 family. As to quaternary structure, component of the 60S large ribosomal subunit (LSU).

The protein localises to the cytoplasm. Its function is as follows. Component of the ribosome, a large ribonucleoprotein complex responsible for the synthesis of proteins in the cell. The small ribosomal subunit (SSU) binds messenger RNAs (mRNAs) and translates the encoded message by selecting cognate aminoacyl-transfer RNA (tRNA) molecules. The large subunit (LSU) contains the ribosomal catalytic site termed the peptidyl transferase center (PTC), which catalyzes the formation of peptide bonds, thereby polymerizing the amino acids delivered by tRNAs into a polypeptide chain. The nascent polypeptides leave the ribosome through a tunnel in the LSU and interact with protein factors that function in enzymatic processing, targeting, and the membrane insertion of nascent chains at the exit of the ribosomal tunnel. As part of the LSU, it is probably required for its formation and the maturation of rRNAs. This Danio rerio (Zebrafish) protein is Large ribosomal subunit protein eL13 (rpl13).